The following is a 206-amino-acid chain: Triosephosphate isomerase (206 aa).

The active-site Electrophile is the histidine 76. The Proton acceptor role is filled by glutamate 146.

This sequence belongs to the triosephosphate isomerase family. Homodimer.

It carries out the reaction D-glyceraldehyde 3-phosphate = dihydroxyacetone phosphate. It functions in the pathway carbohydrate biosynthesis; gluconeogenesis. The protein operates within carbohydrate degradation; glycolysis; D-glyceraldehyde 3-phosphate from glycerone phosphate: step 1/1. The sequence is that of Triosephosphate isomerase (Tpi) from Aedes togoi (Mosquito).